The chain runs to 469 residues: Dihydrolipoyl dehydrogenase (469 aa).

FAD is bound by residues 34–42 (EKQYWGGVC), Lys-51, and Gly-114. A disulfide bond links Cys-42 and Cys-47. NAD(+) is bound by residues 179 to 183 (GAGAI), Glu-202, and 269 to 272 (SVGF). 2 residues coordinate FAD: Asp-312 and Ala-320. His-448 (proton acceptor) is an active-site residue.

This sequence belongs to the class-I pyridine nucleotide-disulfide oxidoreductase family. Homodimer. Part of an unusual ODH/PDH supercomplex, consisting of AceE (E1), AceF (E2), and Lpd (E3) together with OdhA (E1+E2). The cofactor is FAD.

It is found in the cytoplasm. The enzyme catalyses N(6)-[(R)-dihydrolipoyl]-L-lysyl-[protein] + NAD(+) = N(6)-[(R)-lipoyl]-L-lysyl-[protein] + NADH + H(+). It participates in carbohydrate metabolism; tricarboxylic acid cycle; succinyl-CoA from 2-oxoglutarate (dehydrogenase route): step 1/1. Its function is as follows. Lipoamide dehydrogenase is an essential component of the pyruvate dehydrogenase (PDH) and 2-oxoglutarate dehydrogenase (ODH) complexes. Catalyzes the reoxidation of dihydrolipoyl groups which are covalently attached to the lipoate acyltransferase components (E2) of the complexes. Also catalyzes a reversible NADH:NAD(+) transhydrogenation, and is able to transfer electrons from NADH to various redox-active compounds and quinones. May be involved in quinone redox cycling in C.glutamicum. This is Dihydrolipoyl dehydrogenase (lpd) from Corynebacterium glutamicum (strain ATCC 13032 / DSM 20300 / JCM 1318 / BCRC 11384 / CCUG 27702 / LMG 3730 / NBRC 12168 / NCIMB 10025 / NRRL B-2784 / 534).